The sequence spans 442 residues: Sexual development regulator VELC (442 aa).

Disordered regions lie at residues 1 to 192 (MPVH…ASLA) and 396 to 442 (KKGN…IRRS). Residues 45–54 (IAPPPPPTPP) show a composition bias toward pro residues. Residues 79–97 (PGPRRPSNPSSPQHPQQPG) show a composition bias toward low complexity. Residues 213 to 396 (FSTSEYHLHV…KEQGCLISIK (184 aa)) enclose the Velvet domain. Residues 401-411 (KGGGGGGGGPS) show a composition bias toward gly residues. The span at 433 to 442 (AGKRKRIRRS) shows a compositional bias: basic residues.

It belongs to the velvet family. VelC subfamily.

The protein localises to the nucleus. Functionally, velvet-domain-containing protein that acts as a positive regulator of sexual development. Plays an important role in pathogenicity through regulating positively appressorium-mediated penetration and invasive growth. The polypeptide is Sexual development regulator VELC (Pyricularia oryzae (strain 70-15 / ATCC MYA-4617 / FGSC 8958) (Rice blast fungus)).